The primary structure comprises 933 residues: Progesterone receptor (933 aa).

Positions 1 to 164 (MTELKAKGPR…PATQRVLSPL (164 aa)) are AF3; mediates transcriptional activation. Residues 1 to 256 (MTELKAKGPR…AAAGGGAAAV (256 aa)) form a disordered region. The interval 1–566 (MTELKAKGPR…YSFESLPQKI (566 aa)) is modulating, Pro-Rich. Serine 20 carries the phosphoserine modification. 2 short sequence motifs (LXXL motif) span residues 55-59 (LDGLL) and 115-119 (LDTLL). Serine 130 and serine 162 each carry phosphoserine. The segment at 165–305 (MSRSGGKAGD…LATTTMDFIH (141 aa)) is mediates transcriptional transrepression. A Nuclear localization signal motif is present at residues 183–187 (KVLPR). 2 positions are modified to phosphoserine: serine 190 and serine 213. The span at 220-231 (EVEEEDGSESED) shows a compositional bias: acidic residues. Position 294 is a phosphoserine; by MAPK1 (serine 294). The disordered stretch occupies residues 332–380 (GAGAASAFAPPRSSPSASSTPVAVGDFPDCAYPPDADPKDDAYPLYGDF). Positions 335 to 350 (AASAFAPPRSSPSASS) are enriched in low complexity. Phosphoserine; by MAPK is present on serine 345. Lysine 388 is covalently cross-linked (Glycyl lysine isopeptide (Lys-Gly) (interchain with G-Cter in SUMO); alternate). Residue lysine 388 forms a Glycyl lysine isopeptide (Lys-Gly) (interchain with G-Cter in ubiquitin); alternate linkage. The residue at position 400 (serine 400) is a Phosphoserine; by CDK2. The interval 415–454 (PDFPLGPPPPLPPRAPPSRPGEAAVTAAPASASVSSSSSS) is disordered. Over residues 418-433 (PLGPPPPLPPRAPPSR) the composition is skewed to pro residues. Residues 434 to 454 (PGEAAVTAAPASASVSSSSSS) are compositionally biased toward low complexity. The segment at 456 to 546 (STLECILYKA…VYPPYLNYLR (91 aa)) is AF1; mediates transcriptional activation. Lysine 531 participates in a covalent cross-link: Glycyl lysine isopeptide (Lys-Gly) (interchain with G-Cter in SUMO). 2 consecutive NR C4-type zinc fingers follow at residues 567 to 587 (CLIC…CGSC) and 603 to 627 (CAGR…LRKC). A DNA-binding region (nuclear receptor) is located at residues 567-639 (CLICGDEASG…AGMVLGGRKF (73 aa)). Residue serine 676 is modified to Phosphoserine. Positions 679-913 (QDIQFFPPLI…EFPEMMSEVI (235 aa)) constitute an NR LBD domain. The segment at 687–933 (LINLLVSIEP…MVKPLLFHKK (247 aa)) is AF2; mediates transcriptional activation. Arginine 766 serves as a coordination point for progesterone.

It belongs to the nuclear hormone receptor family. As to quaternary structure, interacts with SMARD1 and UNC45A. Interacts with CUEDC2; the interaction promotes ubiquitination, decreases sumoylation, and represses transcriptional activity. Interacts with PIAS3; the interaction promotes sumoylation of PR in a hormone-dependent manner, inhibits DNA-binding, and alters nuclear export. Interacts with SP1; the interaction requires ligand-induced phosphorylation on Ser-345 by ERK1/2-MAPK. Interacts with PRMT2. Interacts with NCOA2 and NCOA1. Interacts with KLF9. Interacts with GTF2B. Post-translationally, phosphorylated on multiple serine sites. Several of these sites are hormone-dependent. Phosphorylation on Ser-294 is highly hormone-dependent and modulates ubiquitination and sumoylation on Lys-388. Phosphorylation on Ser-345 also requires induction by hormone. Basal phosphorylation on Ser-162, Ser-190 and Ser-400 is increased in response to progesterone and can be phosphorylated in vitro by the CDK2-A1 complex. Increased levels of phosphorylation on Ser-400 also in the presence of EGF, heregulin, IGF, PMA and FBS. Phosphorylation at this site by CDK2 is ligand-independent, and increases nuclear translocation and transcriptional activity. Phosphorylation at Ser-162 and Ser-294, but not at Ser-190, is impaired during the G(2)/M phase of the cell cycle. Phosphorylation on Ser-345 by ERK1/2 MAPK is required for interaction with SP1. In terms of processing, sumoylation is hormone-dependent and represses transcriptional activity. Sumoylation on all three sites is enhanced by PIAS3. Desumoylated by SENP1. Sumoylation on Lys-388, the main site of sumoylation, is repressed by ubiquitination on the same site, and modulated by phosphorylation at Ser-294. Ubiquitination is hormone-dependent and represses sumoylation on the same site. Promoted by MAPK-mediated phosphorylation on Ser-294. Ubiquitinated by UBR5, leading to its degradation: UBR5 specifically recognizes and binds ligand-bound PGR when it is not associated with coactivators (NCOAs). In presence of NCOAs, the UBR5-degron is not accessible, preventing its ubiquitination and degradation. Post-translationally, palmitoylated by ZDHHC7 and ZDHHC21. Palmitoylation is required for plasma membrane targeting and for rapid intracellular signaling via ERK and AKT kinases and cAMP generation.

The protein resides in the nucleus. It localises to the cytoplasm. The steroid hormones and their receptors are involved in the regulation of eukaryotic gene expression and affect cellular proliferation and differentiation in target tissues. Transcriptional activator of several progesteron-dependent promoters in a variety of cell types. Involved in activation of SRC-dependent MAPK signaling on hormone stimulation. This Chlorocebus aethiops (Green monkey) protein is Progesterone receptor (PGR).